A 508-amino-acid chain; its full sequence is Photosystem II CP47 reaction center protein (508 aa).

6 helical membrane passes run alanine 21–serine 36, isoleucine 101–tryptophan 115, glycine 140–phenylalanine 156, isoleucine 203–serine 218, valine 237–valine 252, and serine 457–arginine 472.

Belongs to the PsbB/PsbC family. PsbB subfamily. PSII is composed of 1 copy each of membrane proteins PsbA, PsbB, PsbC, PsbD, PsbE, PsbF, PsbH, PsbI, PsbJ, PsbK, PsbL, PsbM, PsbT, PsbX, PsbY, PsbZ, Psb30/Ycf12, at least 3 peripheral proteins of the oxygen-evolving complex and a large number of cofactors. It forms dimeric complexes. It depends on Binds multiple chlorophylls. PSII binds additional chlorophylls, carotenoids and specific lipids. as a cofactor.

It is found in the plastid. Its subcellular location is the chloroplast thylakoid membrane. In terms of biological role, one of the components of the core complex of photosystem II (PSII). It binds chlorophyll and helps catalyze the primary light-induced photochemical processes of PSII. PSII is a light-driven water:plastoquinone oxidoreductase, using light energy to abstract electrons from H(2)O, generating O(2) and a proton gradient subsequently used for ATP formation. This chain is Photosystem II CP47 reaction center protein, found in Lotus japonicus (Lotus corniculatus var. japonicus).